Reading from the N-terminus, the 291-residue chain is MPKIRKAVIPAAGLGTRLLPATKAIPKEMLPLVNKPTIQYIVEEAVASGIKEILVIVSSKKEAIIDHFDYDFILENALLQKHKDQEHQEIKDIANLAHIYFVRQKHQHGLGDAILHAKSFVGNEDFAVLLGDDVVFGEQPALAQCIQAYEQTDCQVIGVQEVPHDQVNKYGIVTPEANWQKQALVKILGMVEKPAVNEAKSNLAILSRYILKPSIFTALKQVPFGVGGELQLTDGLNYCLQQGEPFFAKHFGGTRFDVGTKNGFIKANLYTALKTDAITKDEVLAILKEFA.

It belongs to the UDPGP type 2 family.

The enzyme catalyses alpha-D-glucose 1-phosphate + UTP + H(+) = UDP-alpha-D-glucose + diphosphate. In terms of biological role, may play a role in stationary phase survival. The protein is UTP--glucose-1-phosphate uridylyltransferase (galU) of Mycoplasma pneumoniae (strain ATCC 29342 / M129 / Subtype 1) (Mycoplasmoides pneumoniae).